Here is a 263-residue protein sequence, read N- to C-terminus: TPR repeat-containing protein DDB_G0285095 (263 aa).

The segment covering 1–25 (MGCCGSKEKYNGEDVPKSQRLENRP) has biased composition (basic and acidic residues). Positions 1-62 (MGCCGSKEKY…ASASQQNNPT (62 aa)) are disordered. TPR repeat units lie at residues 87–120 (SDLLAQYGVLLSMEGKNKEAEESLRKAVEVDTDN), 121–154 (SRAWQAYGEFLERTNNPKKAKEVYGEAYKHAAPK), and 162–195 (SSLLLSYAIFIQKSGEIDKAEKLYKRIVTSGARS).

This is TPR repeat-containing protein DDB_G0285095 from Dictyostelium discoideum (Social amoeba).